A 172-amino-acid polypeptide reads, in one-letter code: MEYFNVGKIVNTQGLQGEMRVLSVSDFTEERFQKGARLALFDDKDRFVQEVEIASHRKHKQFDIIKFKGMYHINAIEQFKGYNLKIAKEHQGKLAEGEFYYHQIIGLEVYEKDQLVGEIKEILQPGANDVWVVKRQSKRDLLLPYIPSVVLCVDIEKHRVDVEIMEGLDDED.

In terms of domain architecture, PRC barrel spans 95 to 168 (AEGEFYYHQI…RVDVEIMEGL (74 aa)).

The protein belongs to the RimM family. As to quaternary structure, binds ribosomal protein uS19.

The protein localises to the cytoplasm. Its function is as follows. An accessory protein needed during the final step in the assembly of 30S ribosomal subunit, possibly for assembly of the head region. Essential for efficient processing of 16S rRNA. May be needed both before and after RbfA during the maturation of 16S rRNA. It has affinity for free ribosomal 30S subunits but not for 70S ribosomes. This chain is Ribosome maturation factor RimM, found in Streptococcus equi subsp. zooepidemicus (strain MGCS10565).